The chain runs to 280 residues: Ycf3-interacting protein 1, chloroplastic (280 aa).

A chloroplast-targeting transit peptide spans 1–62 (MTTQIFQLPL…NNRRFGSLIV (62 aa)). The interval 75 to 103 (PVPLTLEQQEKEKQNRDDEEDEIDEGDVD) is disordered. Positions 91 to 103 (DDEEDEIDEGDVD) are enriched in acidic residues. The chain crosses the membrane as a helical span at residues 255 to 275 (ALYFVSALPVIIGISVVLILF).

This sequence belongs to the Y3IP1/CEST family. Interacts with Ycf3. Expressed in cotyledons, rosette and cauline leaves, stems and sepals.

The protein resides in the plastid. It is found in the chloroplast thylakoid membrane. Functionally, nuclear genome-encoded factor that participates in photosystem I (PSI) biogenesis. Cooperates with the plastid genome-encoded protein PSI assembly Ycf3 in the assembly of stable PSI units in the thylakoid membrane. Involved in light-induced chloroplast development and growth. Involved in the plant response to abiotic and photooxidative stresses. May be involved in the suppression of photooxidative damage. This chain is Ycf3-interacting protein 1, chloroplastic, found in Arabidopsis thaliana (Mouse-ear cress).